The following is a 338-amino-acid chain: Large ribosomal subunit protein uL3 (338 aa).

Disordered stretches follow at residues 1-44 (MPQP…GFAG), 151-170 (AVPS…VGGG), 206-259 (VTKG…GQTG), and 312-338 (FRPA…SNQG). A compositionally biased stretch (polar residues) spans 22 to 31 (SETPRFNSWP). Positions 220-237 (GVQKRKGKHARQGWRRRI) are enriched in basic residues. The segment covering 247–259 (RVRSTVPQQGQTG) has biased composition (polar residues).

The protein belongs to the universal ribosomal protein uL3 family. Part of the 50S ribosomal subunit. Forms a cluster with proteins L14 and L24e. Interacts weakly with protein L13.

In terms of biological role, one of the primary rRNA binding proteins, it binds directly near the 3'-end of the 23S rRNA, where it nucleates assembly of the 50S subunit. The polypeptide is Large ribosomal subunit protein uL3 (rpl3) (Haloarcula marismortui (strain ATCC 43049 / DSM 3752 / JCM 8966 / VKM B-1809) (Halobacterium marismortui)).